Consider the following 432-residue polypeptide: Gamma-glutamyl phosphate reductase (432 aa).

Belongs to the gamma-glutamyl phosphate reductase family.

It localises to the cytoplasm. It carries out the reaction L-glutamate 5-semialdehyde + phosphate + NADP(+) = L-glutamyl 5-phosphate + NADPH + H(+). It participates in amino-acid biosynthesis; L-proline biosynthesis; L-glutamate 5-semialdehyde from L-glutamate: step 2/2. Catalyzes the NADPH-dependent reduction of L-glutamate 5-phosphate into L-glutamate 5-semialdehyde and phosphate. The product spontaneously undergoes cyclization to form 1-pyrroline-5-carboxylate. The protein is Gamma-glutamyl phosphate reductase of Corynebacterium melassecola.